The primary structure comprises 282 residues: 4-deoxy-L-threo-5-hexosulose-uronate ketol-isomerase 2 (282 aa).

Residues histidine 200, histidine 202, glutamate 207, and histidine 249 each coordinate Zn(2+).

Belongs to the KduI family. The cofactor is Zn(2+).

The enzyme catalyses 5-dehydro-4-deoxy-D-glucuronate = 3-deoxy-D-glycero-2,5-hexodiulosonate. It participates in glycan metabolism; pectin degradation; 2-dehydro-3-deoxy-D-gluconate from pectin: step 4/5. Its function is as follows. Catalyzes the isomerization of 5-dehydro-4-deoxy-D-glucuronate to 3-deoxy-D-glycero-2,5-hexodiulosonate. This chain is 4-deoxy-L-threo-5-hexosulose-uronate ketol-isomerase 2 (kduI2), found in Rhizobium meliloti (strain 1021) (Ensifer meliloti).